Reading from the N-terminus, the 580-residue chain is Bifunctional lycopene cyclase/phytoene synthase (580 aa).

3 consecutive transmembrane segments (helical) span residues 3 to 23 (WEYAQVHLKYTIPFGVVLAAV), 35 to 55 (KLVFLITVAVVSTIPWDSYLI), and 65 to 85 (GVVVGLTAWDIPAEELFFFVI). A glycan (N-linked (GlcNAc...) asparagine) is linked at Asn89. The next 4 membrane-spanning stretches (helical) occupy residues 116–136 (IAGQILFASAIIFGLVSVSSG), 139–159 (GMYMGLILIWACPFLLFLWSI), 171–191 (NTALPIALPTLYLWVVDTFAL), and 214–234 (IEEAVFFLLTNTLIVFGLIAC).

This sequence in the N-terminal section; belongs to the lycopene beta-cyclase family. It in the C-terminal section; belongs to the phytoene/squalene synthase family.

Its subcellular location is the membrane. It catalyses the reaction all-trans-lycopene = gamma-carotene. The catalysed reaction is gamma-carotene = all-trans-beta-carotene. The enzyme catalyses 2 (2E,6E,10E)-geranylgeranyl diphosphate = 15-cis-phytoene + 2 diphosphate. Its pathway is carotenoid biosynthesis; beta-carotene biosynthesis. The protein operates within carotenoid biosynthesis; phytoene biosynthesis; all-trans-phytoene from geranylgeranyl diphosphate: step 1/1. Bifunctional enzyme; part of the car gene cluster that mediates the biosynthesis of neurosporaxanthin, a carboxylic apocarotenoid acting as an essential protective pigments and leading to orange pigmentation. CarAR catalyzes the first step of the pathway by converting geranylgeranyl diphosphate to phytoene, as well as the later cyclization step that transforms the carB product lycopene into gamma-carotene. CarAR also converts part of gamma-carotene into beta-carotene. Neurosporaxanthin is synthesized from geranyl-geranyl pyrophosphate (GGPP) through several enzymatic activities. Phytoene synthase activity performed by the bifunctional enzyme carAR first produces phytoene from geranyl-geranyl pyrophosphate (GGPP). The phytoene dehydrogenase carB then introduces 4 desaturations to lead to lycopene which is substrate of the carotene cyclase activity of carAR that leads to the production of gamma-carotene. CarB then performs a 5th desaturation reaction to yield torulene. Torulene is the substrate of the dioxidase carT that breaks the molecule, removing five carbon atoms to yield beta-apo-4'-carotenal, whereas the aldehyde dehydrogenase carD mediates the last step by converting beta-apo-4'-carotenal into neurosporaxanthin. This Gibberella fujikuroi (strain CBS 195.34 / IMI 58289 / NRRL A-6831) (Bakanae and foot rot disease fungus) protein is Bifunctional lycopene cyclase/phytoene synthase.